The primary structure comprises 545 residues: Carboxypeptidase Y homolog A (545 aa).

The N-terminal stretch at 1 to 17 (MKSLALALLVGGAIAAG) is a signal peptide. Residues 18–123 (PQQQVLQAPV…KLEAYDLRVK (106 aa)) constitute a propeptide that is removed on maturation. Disulfide bonds link Cys177-Cys416, Cys311-Cys325, Cys335-Cys358, Cys342-Cys351, and Cys380-Cys386. Asn208 carries an N-linked (GlcNAc...) asparagine glycan. Ser264 is an active-site residue. Asp455 is an active-site residue. Residues Asn485, Asn491, and Asn506 are each glycosylated (N-linked (GlcNAc...) asparagine). Residue His517 is part of the active site.

The protein belongs to the peptidase S10 family.

The protein localises to the vacuole. It catalyses the reaction Release of a C-terminal amino acid with broad specificity.. Its function is as follows. Vacuolar carboxypeptidase involved in degradation of small peptides. Digests preferentially peptides containing an aliphatic or hydrophobic residue in P1' position, as well as methionine, leucine or phenylalanine in P1 position of ester substrate. The polypeptide is Carboxypeptidase Y homolog A (CPYA) (Blastomyces gilchristii (strain SLH14081) (Blastomyces dermatitidis)).